We begin with the raw amino-acid sequence, 446 residues long: N-succinylarginine dihydrolase (446 aa).

Residues 19–28 (AGLSFGNVAS), Asn110, and 137–138 (HR) contribute to the substrate site. Glu174 is an active-site residue. Position 213 (Arg213) interacts with substrate. The active site involves His249. Substrate-binding residues include Asp251 and Asn364. Residue Cys370 is the Nucleophile of the active site.

Belongs to the succinylarginine dihydrolase family. As to quaternary structure, homodimer.

It carries out the reaction N(2)-succinyl-L-arginine + 2 H2O + 2 H(+) = N(2)-succinyl-L-ornithine + 2 NH4(+) + CO2. It functions in the pathway amino-acid degradation; L-arginine degradation via AST pathway; L-glutamate and succinate from L-arginine: step 2/5. Catalyzes the hydrolysis of N(2)-succinylarginine into N(2)-succinylornithine, ammonia and CO(2). The sequence is that of N-succinylarginine dihydrolase from Burkholderia mallei (strain NCTC 10247).